Here is a 285-residue protein sequence, read N- to C-terminus: MLIIRNKQELKEVILKQKQANKTIGFVPTMGFLHEGHMTLVSHARKESDFVVMSVFVNPTQFGPNEDFDAYPRDEAHDAKLAEEGGVDILFVPTVEEIYPTELSTKLHVDKRVSVLDGADREGHFDGVVTVLTKLFHLVSPDNAYFGQKDAQQVAVVSGLVEDYFFPVNLRIIATVREADGLAKSSRNVYLTEKERKEAPVIHEALQLGRKLIESGETNQAKIVQMMTEKINEQTSHELIAYLAIYSYPEFTPVTDWSKGIIIAAAVKYSKARLIDNELINVKRR.

Met30–His37 contributes to the ATP binding site. The active-site Proton donor is the His37. Gln61 lines the (R)-pantoate pocket. Beta-alanine is bound at residue Gln61. ATP is bound at residue Gly147 to Asp150. Residue Gln153 coordinates (R)-pantoate. ATP-binding positions include Val176 and Lys184–Arg187.

The protein belongs to the pantothenate synthetase family. Homodimer.

Its subcellular location is the cytoplasm. It carries out the reaction (R)-pantoate + beta-alanine + ATP = (R)-pantothenate + AMP + diphosphate + H(+). It functions in the pathway cofactor biosynthesis; (R)-pantothenate biosynthesis; (R)-pantothenate from (R)-pantoate and beta-alanine: step 1/1. Its function is as follows. Catalyzes the condensation of pantoate with beta-alanine in an ATP-dependent reaction via a pantoyl-adenylate intermediate. This is Pantothenate synthetase from Listeria monocytogenes serovar 1/2a (strain ATCC BAA-679 / EGD-e).